The primary structure comprises 501 residues: WD repeat-containing protein wdr-5.3 (501 aa).

3 disordered regions span residues 1 to 35 (MNPERQETISPKNVPFQPVPTPNQQSLQSRMLESN), 58 to 85 (PIGVPQTARPPSNQSPHPNPPGYPYQSH), and 155 to 197 (KSAE…ITKK). Polar residues predominate over residues 22–35 (PNQQSLQSRMLESN). The segment covering 167 to 177 (SITTKPTSTIQ) has biased composition (polar residues). WD repeat units follow at residues 211 to 241 (GHTKSVSVIKFSYCGKYLGTGSADKQIKVWN), 253 to 283 (SHQLGINDFSWSSNSQFIASASDDTTVKIFD), 295 to 325 (GHTNYVFCCSFNPQSSLIASAGFDETVRVWD), 337 to 367 (AHSDPITSISYNHDGNTMATSSYDGCIRVWD), 381 to 410 (DHAPVTFVCFSPNGKYLLSAQLDSSLKLWD), 422 to 455 (GHKNKKYCLFANMSVPLGKHIISGSEDGRILVWS), and 467 to 499 (GHTTPVLATDSHPTLNIIASGGLEPDNVIRIWR).

Belongs to the WD repeat WDR5/wds family.

In terms of biological role, not required for methylation of histone H3 'Lys-4'. The protein is WD repeat-containing protein wdr-5.3 (wdr-5.3) of Caenorhabditis elegans.